Consider the following 237-residue polypeptide: Pheromone-regulated membrane protein 8 (237 aa).

Residues M1–H47 are Cytoplasmic-facing. A helical transmembrane segment spans residues C48 to F68. Over H69–C74 the chain is Extracellular. Residues V75 to L95 traverse the membrane as a helical segment. Over R96–F237 the chain is Cytoplasmic. Residues S174–F201 form a disordered region. The COPII binding stretch occupies residues F236 to F237.

The protein belongs to the DUP/COS family. As to quaternary structure, interacts with PRM9. Binds to SEC23/24 of COPII coated vesicles.

The protein localises to the membrane. Its subcellular location is the endoplasmic reticulum. Its function is as follows. May be involved in endoplasmic reticulum exit trafficking of proteins. This is Pheromone-regulated membrane protein 8 (PRM8) from Saccharomyces cerevisiae (strain ATCC 204508 / S288c) (Baker's yeast).